We begin with the raw amino-acid sequence, 374 residues long: Anhydro-N-acetylmuramic acid kinase (374 aa).

12–19 is a binding site for ATP; the sequence is GTSLDGVD.

The protein belongs to the anhydro-N-acetylmuramic acid kinase family.

It carries out the reaction 1,6-anhydro-N-acetyl-beta-muramate + ATP + H2O = N-acetyl-D-muramate 6-phosphate + ADP + H(+). Its pathway is amino-sugar metabolism; 1,6-anhydro-N-acetylmuramate degradation. The protein operates within cell wall biogenesis; peptidoglycan recycling. In terms of biological role, catalyzes the specific phosphorylation of 1,6-anhydro-N-acetylmuramic acid (anhMurNAc) with the simultaneous cleavage of the 1,6-anhydro ring, generating MurNAc-6-P. Is required for the utilization of anhMurNAc either imported from the medium or derived from its own cell wall murein, and thus plays a role in cell wall recycling. In Enterobacter sp. (strain 638), this protein is Anhydro-N-acetylmuramic acid kinase.